A 240-amino-acid chain; its full sequence is UDP-2,3-diacylglucosamine hydrolase (240 aa).

Mn(2+) is bound by residues Asp8, His10, Asp41, Asn78, and His113. A substrate-binding site is contributed by 78–79; sequence NR. Substrate contacts are provided by Asp121, Ser159, Asn163, Lys166, and His194. Residues His194 and His196 each coordinate Mn(2+).

It belongs to the LpxH family. It depends on Mn(2+) as a cofactor.

Its subcellular location is the cell inner membrane. It catalyses the reaction UDP-2-N,3-O-bis[(3R)-3-hydroxytetradecanoyl]-alpha-D-glucosamine + H2O = 2-N,3-O-bis[(3R)-3-hydroxytetradecanoyl]-alpha-D-glucosaminyl 1-phosphate + UMP + 2 H(+). It participates in glycolipid biosynthesis; lipid IV(A) biosynthesis; lipid IV(A) from (3R)-3-hydroxytetradecanoyl-[acyl-carrier-protein] and UDP-N-acetyl-alpha-D-glucosamine: step 4/6. In terms of biological role, hydrolyzes the pyrophosphate bond of UDP-2,3-diacylglucosamine to yield 2,3-diacylglucosamine 1-phosphate (lipid X) and UMP by catalyzing the attack of water at the alpha-P atom. Involved in the biosynthesis of lipid A, a phosphorylated glycolipid that anchors the lipopolysaccharide to the outer membrane of the cell. This is UDP-2,3-diacylglucosamine hydrolase from Shewanella baltica (strain OS223).